Consider the following 292-residue polypeptide: Protein/nucleic acid deglycase HchA (292 aa).

Over residues 1-12 (MSQDVNKLSKQP) the composition is skewed to polar residues. Residues 1–23 (MSQDVNKLSKQPTPDKAEDNAFF) form a disordered region. The active-site Nucleophile is the C190.

Belongs to the peptidase C56 family. HchA subfamily.

It is found in the cytoplasm. It catalyses the reaction N(omega)-(1-hydroxy-2-oxopropyl)-L-arginyl-[protein] + H2O = lactate + L-arginyl-[protein] + H(+). The catalysed reaction is N(6)-(1-hydroxy-2-oxopropyl)-L-lysyl-[protein] + H2O = lactate + L-lysyl-[protein] + H(+). The enzyme catalyses S-(1-hydroxy-2-oxopropyl)-L-cysteinyl-[protein] + H2O = lactate + L-cysteinyl-[protein] + H(+). It carries out the reaction N(omega)-(1-hydroxy-2-oxoethyl)-L-arginyl-[protein] + H2O = L-arginyl-[protein] + glycolate + H(+). It catalyses the reaction N(6)-(1-hydroxy-2-oxoethyl)-L-lysyl-[protein] + H2O = glycolate + L-lysyl-[protein] + H(+). The catalysed reaction is S-(1-hydroxy-2-oxoethyl)-L-cysteinyl-[protein] + H2O = glycolate + L-cysteinyl-[protein] + H(+). The enzyme catalyses N(2)-(1-hydroxy-2-oxopropyl)-dGTP + H2O = lactate + dGTP + H(+). It carries out the reaction N(2)-(1-hydroxy-2-oxopropyl)-GTP + H2O = lactate + GTP + H(+). It catalyses the reaction N(2)-(1-hydroxy-2-oxopropyl)-GDP + H2O = lactate + GDP + H(+). The catalysed reaction is N(2)-(1-hydroxy-2-oxopropyl)-GMP + H2O = lactate + GMP + H(+). The enzyme catalyses N(2)-(1-hydroxy-2-oxoethyl)-dGTP + H2O = dGTP + glycolate + H(+). It carries out the reaction N(2)-(1-hydroxy-2-oxoethyl)-GTP + H2O = glycolate + GTP + H(+). It catalyses the reaction N(2)-(1-hydroxy-2-oxoethyl)-GDP + H2O = glycolate + GDP + H(+). The catalysed reaction is N(2)-(1-hydroxy-2-oxoethyl)-GMP + H2O = glycolate + GMP + H(+). The enzyme catalyses an N(2)-(1-hydroxy-2-oxopropyl)-guanosine in RNA + H2O = a guanosine in RNA + lactate + H(+). It carries out the reaction an N(2)-(1-hydroxy-2-oxopropyl)-2'-deoxyguanosine in DNA + H2O = a 2'-deoxyguanosine in DNA + lactate + H(+). It catalyses the reaction an N(2)-(1-hydroxy-2-oxoethyl)-guanosine in RNA + H2O = a guanosine in RNA + glycolate + H(+). The catalysed reaction is an N(2)-(1-hydroxy-2-oxoethyl)-2'-deoxyguanosine in DNA + H2O = a 2'-deoxyguanosine in DNA + glycolate + H(+). Functionally, protein and nucleotide deglycase that catalyzes the deglycation of the Maillard adducts formed between amino groups of proteins or nucleotides and reactive carbonyl groups of glyoxals. Thus, functions as a protein deglycase that repairs methylglyoxal- and glyoxal-glycated proteins, and releases repaired proteins and lactate or glycolate, respectively. Deglycates cysteine, arginine and lysine residues in proteins, and thus reactivates these proteins by reversing glycation by glyoxals. Acts on early glycation intermediates (hemithioacetals and aminocarbinols), preventing the formation of Schiff bases and advanced glycation endproducts (AGE). Also functions as a nucleotide deglycase able to repair glycated guanine in the free nucleotide pool (GTP, GDP, GMP, dGTP) and in DNA and RNA. Is thus involved in a major nucleotide repair system named guanine glycation repair (GG repair), dedicated to reversing methylglyoxal and glyoxal damage via nucleotide sanitization and direct nucleic acid repair. Plays an important role in protecting cells from carbonyl stress. This chain is Protein/nucleic acid deglycase HchA, found in Staphylococcus aureus (strain MRSA252).